Here is a 41-residue protein sequence, read N- to C-terminus: Peroxidase 3 (41 aa).

This sequence belongs to the peroxidase family. Classical plant (class III) peroxidase subfamily. It depends on heme b as a cofactor. Requires Ca(2+) as cofactor.

The protein localises to the secreted. It carries out the reaction 2 a phenolic donor + H2O2 = 2 a phenolic radical donor + 2 H2O. Its function is as follows. Removal of H(2)O(2), oxidation of toxic reductants, biosynthesis and degradation of lignin, suberization, auxin catabolism, response to environmental stresses such as wounding, pathogen attack and oxidative stress. These functions might be dependent on each isozyme/isoform in each plant tissue. This Vitis vinifera (Grape) protein is Peroxidase 3.